A 488-amino-acid polypeptide reads, in one-letter code: Monodehydroascorbate reductase 4, peroxisomal (488 aa).

At 1–3 the chain is on the cytoplasmic side; that stretch reads MGR. A helical transmembrane segment spans residues 4–24; it reads AFVYVILGGGVAAGYAALEFT. FAD-binding positions include 12–15, glutamate 39, arginine 46, lysine 51, and 145–146; these read GGVA and RD. The Peroxisomal segment spans residues 25-458; it reads RRGVSDGELC…SASVVMIKKP (434 aa). NAD(+)-binding positions include 170 to 176, glutamate 194, arginine 200, and glycine 259; that span reads GGYIGME. An NADP(+)-binding site is contributed by 172-176; the sequence is YIGME. Positions 200 and 259 each coordinate NADP(+). Aspartate 296 serves as a coordination point for FAD. 312–313 serves as a coordination point for NAD(+); it reads EH. 312–313 is a binding site for NADP(+); sequence EH. Valine 314 serves as a coordination point for FAD. Arginine 318 provides a ligand contact to L-ascorbate. Residue tyrosine 344 coordinates FAD. Tyrosine 344 lines the NAD(+) pocket. Position 344 (tyrosine 344) interacts with NADP(+). Arginine 346 is an L-ascorbate binding site. A helical membrane pass occupies residues 459 to 479; sequence LYVWHAATGVVVAASVAAFAF. Residues 480–488 lie on the Cytoplasmic side of the membrane; that stretch reads WYGRRRRRW.

This sequence belongs to the FAD-dependent oxidoreductase family. FAD is required as a cofactor.

The protein resides in the peroxisome membrane. The enzyme catalyses 2 monodehydro-L-ascorbate radical + NADH + H(+) = 2 L-ascorbate + NAD(+). In terms of biological role, catalyzes the conversion of monodehydroascorbate to ascorbate, oxidizing NADH in the process. Involved in the detoxification of H(2)O(2) that escapes the peroxisome and causes oxidative damage to oil bodies. This chain is Monodehydroascorbate reductase 4, peroxisomal, found in Arabidopsis thaliana (Mouse-ear cress).